A 251-amino-acid chain; its full sequence is SPbeta prophage-derived putative antirepressor protein YoqD (251 aa).

The chain is SPbeta prophage-derived putative antirepressor protein YoqD (yoqD) from Bacillus subtilis (strain 168).